The following is a 1558-amino-acid chain: ABC transporter NFT1 (1558 aa).

Residues 1–29 (MIKNGTCPYWERDDLSECARREYIEFKFP) lie on the Extracellular side of the membrane. Residue Asn4 is glycosylated (N-linked (GlcNAc...) asparagine). A helical membrane pass occupies residues 30–50 (LFILLTGMIYAFCKVFRAFYL). At 51–103 (RGKNHTNEAPEFEEQGNGNHEYARFSVLRLKSAWESRSFCNVNNRSTFDKFKK) the chain is on the cytoplasmic side. Residues 104–124 (FIEGAFIVLQLTIHLYILSSM) form a helical membrane-spanning segment. At 125–130 (PMDNKK) the chain is on the extracellular side. A helical membrane pass occupies residues 131–151 (FFHQGFLVQMFLWILLLVVIT). The Cytoplasmic portion of the chain corresponds to 152-169 (LRLISASQSFRWVLACKR). The helical transmembrane segment at 170-190 (DLWAVSFYSYASLFTLSILPL) threads the bilayer. The Extracellular segment spans residues 191-201 (RSVFIGKIKDK). A helical transmembrane segment spans residues 202–222 (IMVKYIISETFIDLALLLLLS). The Cytoplasmic portion of the chain corresponds to 223–302 (TSSIEGTRYS…SSKKGRLLPN (80 aa)). A helical membrane pass occupies residues 303–323 (IICYFKAVFISQLFLAFVSSF). An ABC transmembrane type-1 1 domain is found at 311 to 621 (FISQLFLAFV…IASTVSLLIQ (311 aa)). Residues 324 to 351 (LNFVPSLLMPRILSYVNDPKSKSWNLVS) lie on the Extracellular side of the membrane. Residues 352–374 (LYVSSMLVSKIIATTCRGQGLFL) traverse the membrane as a helical segment. Topologically, residues 375–449 (GEKGTMQLRT…VMSIDAFKVS (75 aa)) are cytoplasmic. Residues 410-434 (NASTSFEENPDSSEAEPRKKSSRKD) are disordered. Over residues 424-434 (AEPRKKSSRKD) the composition is skewed to basic and acidic residues. Residues 450 to 470 (EAMNTFYLACEAVFMTVTALM) form a helical membrane-spanning segment. At 471–481 (ILYSLLGWSAF) the chain is on the extracellular side. The helical transmembrane segment at 482–504 (AGTFALLAMIPLNFWCATFYGNY) threads the bilayer. Topologically, residues 505-558 (QADQLILTDKRTSGISEALNSIRVIKLLAWENLFYQKIINVRDGEIRLLKKKAT) are cytoplasmic. Residues 559-579 (IFFLNHLIWFFGPTLVSAITF) form a helical membrane-spanning segment. Over 580–584 (SVFIK) the chain is Extracellular. A helical membrane pass occupies residues 585–605 (FQNQTLTPTIAFTALSLFAIL). The Cytoplasmic segment spans residues 606–953 (RTPMDQIAST…KFSAYKWLAD (348 aa)). The ABC transporter 1 domain occupies 651 to 892 (FGFEDASMEW…NEFLRESINN (242 aa)). 686-693 (GPTGSGKS) provides a ligand contact to ATP. The segment covering 892 to 901 (NDSKNTTHNQ) has biased composition (polar residues). Residues 892 to 926 (NDSKNTTHNQIDLKRSTTSKKTKNGDPEGGNSQDE) are disordered. Residues 954-974 (YFGGLGVVFVFTSSSILIHGI) form a helical membrane-spanning segment. Residues 961 to 1251 (VFVFTSSSIL…IIKVFSSVEL (291 aa)) enclose the ABC transmembrane type-1 2 domain. Over 975-1013 (TLSQGFWLRYWLDTGSSGSKSTWLYRIVEGHSNIYFLLT) the chain is Extracellular. Residues 1014–1034 (YIIIGLVSSFLTSGKVWIAII) form a helical membrane-spanning segment. Residues 1035 to 1082 (SGTNVTKKIFAKLLSSILYAKLRFHNVTPTGRIMNRFSKDMDIIDQQL) are Cytoplasmic-facing. The chain crosses the membrane as a helical span at residues 1083 to 1105 (IPNFEGLSYSVVVCLWIILLIGY). The Extracellular portion of the chain corresponds to 1106-1109 (VTPQ). Residues 1110 to 1132 (FLLFAIPLCALYYTVCTLYLRAS) form a helical membrane-spanning segment. Residues 1133-1199 (RELKRIDNIN…ATEWITYRVD (67 aa)) lie on the Cytoplasmic side of the membrane. The helical transmembrane segment at 1200-1220 (IIGTLVLFSSSVMIIMKASYL) threads the bilayer. The Extracellular portion of the chain corresponds to 1221–1222 (DA). Residues 1223 to 1243 (GLAGILLSNAFSFTETAQWII) form a helical membrane-spanning segment. Topologically, residues 1244 to 1558 (KVFSSVELLM…LAKVSFDNKR (315 aa)) are cytoplasmic. The ABC transporter 2 domain maps to 1285 to 1538 (VELKNLSLRY…RNTIFYRLCR (254 aa)). 1319–1326 (GRTGAGKS) serves as a coordination point for ATP.

Belongs to the ABC transporter superfamily. ABCC family. Conjugate transporter (TC 3.A.1.208) subfamily.

Its subcellular location is the membrane. The sequence is that of ABC transporter NFT1 (NFT1) from Saccharomyces cerevisiae (Baker's yeast).